We begin with the raw amino-acid sequence, 317 residues long: Transcription factor MYB35 (317 aa).

2 consecutive HTH myb-type domains span residues 9–65 (KSNV…RPDL) and 66–116 (KHDS…KKKL). DNA-binding regions (H-T-H motif) lie at residues 37-61 (WSLIPKKAGLNRCGKSCRLRWTNYL) and 89-112 (WSSIARKLPGRTDNDVKNHWNTKL).

Inflorescences-specific. Accumulates in anthers, especially in tapetum and meiocytes/microsporocytes and microspores during anther development.

It is found in the nucleus. In terms of biological role, required for anther development and early tapetal function during microspore maturation. Regulates callose dissolution required for microspores release from the tetrads. The polypeptide is Transcription factor MYB35 (Arabidopsis thaliana (Mouse-ear cress)).